The chain runs to 152 residues: Methylglyoxal synthase (152 aa).

In terms of domain architecture, MGS-like spans 6–152 (RKISARKSIA…YDGYLAERLA (147 aa)). Residues His-19, Lys-23, 45 to 48 (TGTT), and 65 to 66 (SG) each bind substrate. Asp-71 (proton donor/acceptor) is an active-site residue. Substrate is bound at residue His-98.

It belongs to the methylglyoxal synthase family.

The catalysed reaction is dihydroxyacetone phosphate = methylglyoxal + phosphate. Functionally, catalyzes the formation of methylglyoxal from dihydroxyacetone phosphate. The polypeptide is Methylglyoxal synthase (Actinobacillus pleuropneumoniae serotype 3 (strain JL03)).